The sequence spans 83 residues: Large ribosomal subunit protein eL14 (83 aa).

The protein belongs to the eukaryotic ribosomal protein eL14 family.

The chain is Large ribosomal subunit protein eL14 from Thermococcus onnurineus (strain NA1).